We begin with the raw amino-acid sequence, 280 residues long: MTAALPDLSFHPAWHAQLELAYARAGDATRPVTRRHAGPLRVQKHLYAEGPEVCQHILVHPPGGIAGGDSLAFDVRLGERAWAQLTSPGAAKWYRAACPSRQTLEIHLEPGATLEWLPQESIVFAGAQAELETRIQLRGDARLFYWDMVALGRPASGERFASGHFVAALDIRRDDRLLWHERQRIDGGDRLLDSPIGLAGHPVLATLVASGEIDTDLLQRCRALPCAGRGNLSQLPGGLLVARCLADEALHARAWLIELWRLLRPALLGREAVPPRIWST.

The protein belongs to the UreD family. UreD, UreF and UreG form a complex that acts as a GTP-hydrolysis-dependent molecular chaperone, activating the urease apoprotein by helping to assemble the nickel containing metallocenter of UreC. The UreE protein probably delivers the nickel.

It is found in the cytoplasm. Functionally, required for maturation of urease via the functional incorporation of the urease nickel metallocenter. In Pseudomonas aeruginosa (strain UCBPP-PA14), this protein is Urease accessory protein UreD.